Here is a 487-residue protein sequence, read N- to C-terminus: Probable peptidoglycan glycosyltransferase FtsW (487 aa).

A run of 9 helical transmembrane segments spans residues 30–50 (VSLI…VTSA), 71–91 (IYIV…MQWW), 93–113 (TSNA…LLVG), 122–142 (WLAI…FFFC), 167–187 (VVFF…TVVV), 203–223 (LWQF…LIMF), 282–302 (FIMA…VLAL), 332–352 (IGIW…GILP), and 358–378 (FPLL…VGLL). 2 disordered regions span residues 398–419 (KAKA…SAGK) and 444–487 (IDSI…DGYV). A compositionally biased stretch (polar residues) spans 401 to 416 (ASTSSSRKNKPKTASS). Acidic residues predominate over residues 444-453 (IDSIMDDFAQ).

The protein belongs to the SEDS family. FtsW subfamily.

The protein resides in the cell inner membrane. The catalysed reaction is [GlcNAc-(1-&gt;4)-Mur2Ac(oyl-L-Ala-gamma-D-Glu-L-Lys-D-Ala-D-Ala)](n)-di-trans,octa-cis-undecaprenyl diphosphate + beta-D-GlcNAc-(1-&gt;4)-Mur2Ac(oyl-L-Ala-gamma-D-Glu-L-Lys-D-Ala-D-Ala)-di-trans,octa-cis-undecaprenyl diphosphate = [GlcNAc-(1-&gt;4)-Mur2Ac(oyl-L-Ala-gamma-D-Glu-L-Lys-D-Ala-D-Ala)](n+1)-di-trans,octa-cis-undecaprenyl diphosphate + di-trans,octa-cis-undecaprenyl diphosphate + H(+). The protein operates within cell wall biogenesis; peptidoglycan biosynthesis. Functionally, peptidoglycan polymerase that is essential for cell division. The sequence is that of Probable peptidoglycan glycosyltransferase FtsW from Pseudoalteromonas atlantica (strain T6c / ATCC BAA-1087).